Reading from the N-terminus, the 240-residue chain is SURF1-like protein (240 aa).

Helical transmembrane passes span 7 to 23 and 201 to 219; these read VFIT…WQLS and YALT…YVIY.

This sequence belongs to the SURF1 family.

The protein localises to the cell membrane. This is SURF1-like protein from Rickettsia conorii (strain ATCC VR-613 / Malish 7).